The sequence spans 6857 residues: MSTSSSILDIPSKMFRILKNNTRETEQHLSSSTLDLISKSQLLAQCFDTQEIMASLSKTVRSILESQNLEHKSTLTPYNSSQSLQLLVMNTSCTQFKWTTGSTSSVKALLEKELCRGLVPLNDITPKSNYVELSLLTPSILIGNETSTTTTLPEIPLDMEQSIISCVENTLLKEVQALSGQESCQEYFLSANYQSLIPPQVLLNLMKMSSVVDLSPLTLPNTRLWLKLSPFHGGTSVSYATQIKGYANCARREEKCLKNRLTKKQKNQEKGSFDARSVITLGGKMYRYKVVVLRCEDQSDNLSELQFEPQVEYTMDMVPHCWKELVKKRLIRAKGTWDLSCVEDLDLDHVEVRGDSLLHRSSVVHDLTSIVDDTLQEKLFSRTWLRQSLKYSGNILQRLSSLFATEGLKKITLVNSDITPVQVGDKWLNFVDFGKSTVFFVKTLNNIHLAMTRQRESCNYIHEKFGRVRWLGAKPEQGAIVKVFAWCLNKKEFKFRDNQLKQYVCRQGVIKHEPCEYLNVEVLDEFVALNNDLNCVQKIKTYLAAYFGLKKVKLTQKNFMTPLITKKQELVFQPCNCPNHQFYVAQFDKHVTLGLGRKDGILFAEQVPSYAIILAVGFGTVETQLVTHYYSEMRRVYHPLDFQSNTFVFDHQGVMLEDISPADYNDVGEEDYQLEYSGGFDQPFQNYHSDDEDQAFPDFEDERHPDEENWARPIISSGESSVVSSRPSSPLVYSSLVPVASPFGYMNGIRVFDICLADDLDFLQIHGQCPCARCKGLYFYQPIRPRGFTIFENVVEFFSFVEKCEVFEEIGPFFKMIEYSMLYNEYNIFYGLGKKIYQSDLVLPVKHLDQLWKRAQLDIDVVSEFENFKNSLQNINNVVYIAPYFNDQGEWNDIFDGYEFNLNDNQFWFQAKPVYDLVCYIYQGFFSDSRPLEKLYQKLCLDYHTSAMLHTQTHLKYCYVALLHSERAFQMSINLDSLDNEQLHFLATMGMGDASLVGPTYLSEYHSNFNWYSIMSKACHYVKLEQLVGLTYQEKRLMILSRVQEFYEQQHRGPIQLILSPLKVVNLPPITCTEGYCYQPVTRLFDTCVMPDIMKKLSRKRTSVSDVFGILADYFKRTLSYRCFKVHEFCGIERQQEFSDMTTLKLVTDWCQDTYYFYNEYATMTDVEPKVQVSSDYYLKIPSEVVEHIRQFLPHNVNVGLMNYVSSNCDFDQCKFEFCLSGKGYVLGNMFFNRCAIQYVKTNLFIVLFKSRPLLYITQESIYLSDFNVLQAQCLTGEFCLDFEPVQGKTLFGVYFTNGQRYGQQWETLPRFSLKPLNSPRKRVPTQPFEELAEVCIFKQKLKLTQLHNDCSVTPRVCSIPQTITATFQPYYCLENFYGVKAPKVIVSGHLATHYVKLTHKISKCVLVTKLAVARAFYFTPTSMGSHYHLDPMEGISFGKRATVQFEPVGLIKDVNLLVYQFGSHVSIQFFPEAPCIVADGHYPSKYSGVWLGYLPSVEECKIAQVNHRVYVPTILRTSKSAPFHIIQNGDMGRGPITVTYHYAKNFDNKSLTPMFKMFQQVFEKSKDDIFKAFNTMSLEQKKVLSHFCGEFDEAYTLQTMSDEISFESSAYPDVVACSLAYILGYEMCLTVKVNAKNEKLDIGSQCERVFVDYDVKKNEWTLSPEEGEDSDDNLDLPFEQYYEFKIGQTNVVLVQDDFKSVFEFLKSEQGVDYVVNPANSQLKHGGGIAKVISCMCGPKLQAWSNNYITKNKTVPVTKAIKSPGFQLGKKVNIIHAVGPRVSDGDVFQKLDQAWRSVFDLCEDQHTILTSMLSTGIFGCTVNDSFNTFLSNVARLDKSLVVFVVTNMVEQYNQAFAVIKMYQQYHGLPNFGNTCWFNALYQLLKSFSEKEQCVNDLLNCFDDFYDCPTSQCVEWVCEQLGVQFGQQQDAVEMLMKVFDVFKCDVRVGFDCLSRLQQVNCGFCVEVPAQAVLMFSGKDQCGHWTAARKIVDKWYTFDDNHVVQKDPVWQNVVLVLRDRGIFRSADFERKPARRRRVSHRVPRDTLSQDAITYIEDLRFSSGTCLSRYFVESVESFVSGDNVSEVSDEQTCVEVAIEESDGHVEQICQSSVDCVGMPESFQFTFSMPLQTFVQECDQKCEDDFSQEHVECDQQFEPVEQVGQGGQQDGQVDQQIKESEQVVEPSAPSGQESPQALLQQVVDEVVYQIEQVKCDQKQDQDSVQCDEIEEINSRGEQTVQQQLQPILGHDLNENEGPTLSVGAGKLVRCRSLAVTESNLSTSNTIFVWSEVLTHQYIGFKTDLMGLTYNIKFKLICYVLFLWFGVLCCTSHNTPFYMRLCIYLVLLWLSLMIWNASQINVKTGWNELYVLKLLTSIKLPNIVKFRCELVQWFVLKCLFVSFYVYDYVVKVCVSIFQMPQLRPFTWPFIKLGFVDTFLSHHILAFPEKVANQSTLPTCGDKRYYVYVPSWCRASFTSLVMRARELTSTGRSKTLDNWHYQCCSKTAKPLSCFNVREFVFDQDCKHEAYGFLSSLCVYLLFYSGFLTFWLPLFCYYYVLFMCTFKNLPVDITKPIKWTVLQQVVNDVLSLVTKPLFGRPVCPPLTTYLTSTTADEAVKVSRSLLGRFCTPLGFQQPVMNVENGVTVSNFGFFNPLMWPLFVVVLLDNRFIWFFNVLSYVMMPVFVIILFYFYLKKICGCINFKGLSKCCTKHFNQFSKPLVAAGVHGNRTNFTYQPMQEHWCDRHSWYCPKEEHYMTPDMAVYIKNYYNLACAPTADLVWCDYTKSAPTMTWSNFKYSSYKAKETVLCAPSSHADSMLMAWYALLHNVRFTVNPNVVDLPPAVNTIYVSSDSEDSVQDKSQPDVKLRPKKPKGNFKKQSVAYFSREPVDIWYYTTLVIVMGVLFMFMYSCLMVGQYVVMPRDKFFGVNPTGYSYVNAPPYLHAAPPVLQNSDGMILATQLKVPSITYSVYRLLSGHLYFTKLIVSDNECTPPFGAARLSNEFSCNGFTYVLPAHLRFFNRYVMLIHPDQLHMLPFEVEYGSHTRVCYTTGSNSVECLPTFEIISPYVFVFIVVIFTVIFLILIRLYIVMYSYFKVFTYVVFKLLFVNIIMVLFVVCLPPLVPGVVFVLALWLCDSVMFLLYLAFLSLFILPWFYVLFFLFMVGGFVFWWMMRSADVVHLTTDGLTFNGTFEQISKCVFPLNPLIVNRMLLDCQMSHSDLVEKSKLKTTEGKLANEMMKVFMTGETSYYQPSNFSFQSVFSKATSPFTLHARPPMPMFKLYVHFTGSCVGSTSTGTGFAIDDNTIVTAKHLFEYDDLKPTHVSVEIVTRSHSARSASIIWKEPDVKGWTFKGENAYIQVENLKDFYIEDFKYLPFQQIEKDFYKRMEPVTIYSVKYGSEFATQAWQTVNGHFVCYNTEGGDSGAPLVCNGRIVGVHQGLCDNFKTTLASDFEGKMMTEVKGHHVDPPVYYKPIIISAAYNKFVAGEDSSVGDGKNYHKFENEDFACMCKELESVTFGDQLRRYCYNLPQFLEPLQYFHVPSFWQPFKKQSVSNNVSWVVEHLHFIFSIYFLICDFVAYWWLDDPFSVVLPLFFIVQLLSTVFLKNVLFWTTSYLITLAVTFYIHSEVAESMFLLGFLSDRVVNRMSLIIVVAIMCLFVVVRVVVNVKRAIFVFVVSVVLIFVHICLGIVQFNSFVNVVLFDVYAVFTALLTPQPVVAIIMLLLFDTKMLMSFAFIVIVLSFRVFKDYKFVKVLHNFCNFDFVLSQVSLFRYRHRNQGNDPTHYEALWLFLKELYYGIQDAKYEVFSPQAGSYNVKFLTDMTEQDQLEAVEQVQRRLQRFNIVQDKASPRLVLYSKTIEFIKDQIQQQRAVGANPFIITTLTSNDIGLDNVEVHNPANFKPEDLQAHMWFFSKSPVFIGQVPIPTNVQTAAVLDTTYNCQDLTADEKNNVAATLQIQNAAITLSLFEKCTQFLESELGEVPTLMWQAEDVADIKHLESQIENLRKVLDGMQFGTTEYKATRKQLNICQSQLDQAKAFERKLAKFLEKVDQQQAITNETAKQLSAFKNLVKQVYESYMSSLKVKVLEANDASCLLTSTDLPRKLVLMRPITGVDGIKIVEKANGCEITAFGTTFNTGHGSNLAGLAYSTTQPLSAYPFIFNLEGIFKQQANIGYKTVECNMSSHNGSVLYKGKVVAVPSDDNPDFVVCGKGYKLDCGINVLMIPSIVRYITLNLTDHLQKQSLKPRRRLQYRQQGVRLGGVNLGEHQAFSNELISTVGYTTWVSSTVCRDNTHKHPWFVQIPVNEKDPEWFMHNTQLKDNQWVVDLKPTHWLVNADTGEQLFALSLTDEQALKAEAILQKWSPITQDVECWFKDLKGYYTVSGFQPLWPVCPVNICNVRLDPVFKPQSIVYADDPTHFLSLPVVNKNFLAAFYDLQEGFPGKKQVAPHISLTMLKLSDEDIEKVEDILDEMVLPNSWVTITNPHMMGKHYVCDVEGLDSLHDEVVSVLREHGIACDQKRLWKPHLTIGELNDVSFDKFKDFAISCKLEDCDFVKLGAPKANARYEFITTLPLGDFKLLRGAWSACRHLCFQNGAYQSSRSKHYIDLATEYNAGIVKVNKSNTHSVEYQSKRFMIKRVKDQSEFALAKTAFLPSIIPHHMEKQNGEWFLIRGPTSQWSLGDLVYAIWLGDQDYLSECGFVFNPSRDEFLDDANQRSFLANLLEPAILNFSHIYWQVKMCKVPYKLTLDNVDLNGQLYDFGDYPCPNSVDNQSALFVLAEVWSMTRRPFPVAFARLLANEMEIPTDYQMFFQNILLSGSYLDKALCLNNVRPFLSDPANLTTTPFFSQHNGVWTHFYNPIYGLVECNLDEFAELPEVLQQLVTVQGPITNNMTPAISVGEGVYAANVPSASATKQKIPFYDVGLCQELTDAGVDCGEAFKYFYYLSNPAGALADVCYYDYQGTGFYSPKLLAGVYDFMKRVTECYRINERFTYEQAKPRKSSMGINITGYQQDAVYRALGPENIARLFEYAQKAPLPFCTKIITKFALSAKARARTVSSCSFIASTIFRFAHKPVTSKMVEVAQNSGGFCLIGVSKYGLKFSKFLKDKYGAIEGFDVFGSDYTKCDRTFPLSFRALTAALLYELGEWDEKSWLYLNEVNSYMLDTMLCDGMLLNKPGGTSSGDATTAHSNTFYNYMVHYVVAFKTILSDLSEGNKVMRIAAHNAYTTGDYQVFNTLLEDQFQTNYFLNFLSDDSFIFSKPEALKIFTCENFSNKLQTILHTKVDQTKSWSTKGHIEEFCSAHIIKTDGEYHFLPSRGRLLASLLILDKLSDVDIYYMRFVAILCESAVYSRYQPEFFNGLFQVFLDKVQQFRKDYCCDPCPPQLLEREFYENLVFTSNSEVGIVDCYLENFKLQCEFKQQANFDKVCFCCPNPAVSVCEECYVPLPLCAYCYYVHVVISNHSKVEDKFKCFCGQDNIRELYIVLNNSICMYQCKNCVESDRLRISLLSDVDQIVRLPGFKSNSASIAKNGVAQLLTSVDNVDVSLDWNYQESVQQNVARIVYHSANMTQMSIEVVYVSFTLVRNDGSSAILDIPNFKCPDTSYCLFYKPGKSGVLKFTGKGTLTSCYDNKNLTWFKVTCPDFNQPWRLATCFVIQQHDVVYPPIKATQYENVTFVMGPPGTGKTTFVYDTYLSKASSSNRFVYCAPTHRLVGDMDEKVDGAVVVSAYNDRTYRNPVWNKDDSYGVLLCTHNTLPFIKSAVLIADEVSLIPPHVMIKILSMGFKKVVLLGDPFQLSPVYKNHKVHFKYDTFYLLQLATQKRYLTACYRCPPQILSAFSKPYCDVGVDLVSFNNKPGKFDIIVSKQLANIQDFSVLSVLSKEYPGYVILVNYRAAVDYAMQNGLGDVTTIDSSQGTTAANHLLVLFGASNFSKTVNRVIVGCSRSTTHLVVVCCPELFKHFQPILNWPEPKYRYFGMEKQSDFNIIPEVSSLVFCDIEFWHYKADPNSKTRTVYPGQIAVVTSQTLQLYLGVFDDTGYKSALRGLPKDVYVPPNWVWMRKHYPSYEQHAYNMQRLFKFIIDTTFGQPWFILYSCSNDLKSLKFYVEFDTCYFCSCGEMAICLMRDGNYKCRNCYGGMLISKLVNCKYLDVQKERVKLQDAHDAICQQFHGDSHEALCDAVMTKCLYLASYEAAFKDTIHVKYKDLCLEIQYKITSSFVRYDSVHKRYLYRDHGAMYYFRTPRSPMQNVYKYEVGSHAEYSINICTSYEGCQSFGKTCTKCIHIHCIVEQFMADERFKEFILVSVVKSDYVEQALSPAAKALMLTVTKVEDKSFYISNGVRYDLYDYDLSKSVMRVVNSNVKPLPLYSVIVGLGINCTVGCVLPNVPMKLKDELLITDVPLSTLRLDLQTWYYISWPTLSNKNSRWKLAGAQVYDCSVHIYIEATGEQPLYYLQQGKGESLFELPDTLFSTGRLYNLDHDAAQNFNVKQLAIETMPNNHHVFSGDFTEVGTDIGGVHHVVALNGYKGSIIPNYVKPIATGLINVGRAVKRTTLVDVCANQLYEKVKQQLEGVKVSKVIFVNIDFQDVQFMVFANGEDDIQTFYPQKDFVRSYYEWPNILPQIESHYDLKNYGQNPTFMPQPVNFAKYTQICTFIQDHVKVARNALVWHLGAAGVDGCSPGDIVLSSFFKECLVYSWDIKDYSTLLDKHSYDCNFRPNLIVSDIYNVSSNVSEVLDDCVHRLALGGTIVFKTTESSRPDIQLSQFTKYFSAVQFFTAGVNTSSSEVFVVLKYKLYSEPIGEELCSPNILSRIAAYRNKLCIVPNFKVFSTSFSYKYSGVKFVQKCFYVSVPRQFCASGLIQEVPMLCQMEH.

One can recognise a Macro domain in the interval 1679 to 1860 (FEQYYEFKIG…QYNQAFAVIK (182 aa)). The segment at 2158–2191 (QVGQGGQQDGQVDQQIKESEQVVEPSAPSGQESP) is disordered. 10 helical membrane-spanning segments follow: residues 2303–2323 (LTYN…FGVL), 2330–2350 (TPFY…LMIW), 2385–2405 (LVQW…DYVV), 2535–2555 (LFYS…YVLF), 2639–2659 (VTVS…VVVL), 2664–2684 (FIWF…IILF), 2889–2909 (TTLV…LMVG), 3057–3077 (IISP…FLIL), 3106–3126 (VLFV…LALW), and 3142–3162 (LFIL…GFVF). The interval 2303–2683 (LTYNIKFKLI…VMMPVFVIIL (381 aa)) is HD1. The segment at 2889–3162 (TTLVIVMGVL…FLFMVGGFVF (274 aa)) is HD2. Catalysis depends on charge relay system; for 3C-like serine proteinase activity residues His3304, Glu3347, and Ser3416. Positions 3555 to 3738 (HLHFIFSIYF…IVIVLSFRVF (184 aa)) are HD3. The next 7 helical transmembrane spans lie at 3556 to 3575 (LHFI…YWWL), 3580 to 3602 (SVVL…NVLF), 3611 to 3631 (LAVT…LGFL), 3640 to 3660 (SLII…VVNV), 3663 to 3683 (AIFV…LGIV), 3698 to 3718 (AVFT…LLLF), and 3723 to 3738 (LMSF…FRVF). The region spanning 4566–4797 (DFKLLRGAWS…ANEMEIPTDY (232 aa)) is the NiRAN domain. The RdRp catalytic domain occupies 5105 to 5256 (FDVFGSDYTK…FSKPEALKIF (152 aa)). Positions 5413–5528 (FDKVCFCCPN…NGVAQLLTSV (116 aa)) constitute a CV ZBD domain. Residues Cys5417, Cys5420, Cys5428, Cys5431, Cys5438, Cys5441, His5445, His5451, Cys5460, Cys5462, Cys5483, and Cys5486 each contribute to the Zn(2+) site. Residues 5633–5812 (NQPWRLATCF…LQLATQKRYL (180 aa)) enclose the (+)RNA virus helicase ATP-binding domain. Positions 5813–5972 (TACYRCPPQI…FGMEKQSDFN (160 aa)) constitute a (+)RNA virus helicase C-terminal domain. The ExoN domain maps to 5970–6183 (DFNIIPEVSS…YLASYEAAFK (214 aa)). Catalysis depends on residues Asp5984, Glu5986, and Asp6085. His6149, Cys6153, and His6157 together coordinate Zn(2+). Residues His6161 and Asp6166 contribute to the active site. Cys6172 lines the Zn(2+) pocket. Positions 6451–6591 (LPDTLFSTGR…GEDDIQTFYP (141 aa)) constitute a NendoU domain. Catalysis depends on residues His6487, His6504, Lys6536, Lys6633, Asp6709, Lys6737, and Glu6771. The Nidovirus-type SAM-dependent 2'-O-MTase domain occupies 6593-6857 (KDFVRSYYEW…EVPMLCQMEH (265 aa)).

Post-translationally, specific enzymatic cleavages in vivo by its own protease yield mature proteins. 3CL-PRO is autocatalytically processed.

It localises to the host membrane. The enzyme catalyses RNA(n) + a ribonucleoside 5'-triphosphate = RNA(n+1) + diphosphate. The catalysed reaction is ATP + H2O = ADP + phosphate + H(+). In terms of biological role, the 3C-like serine proteinase is responsible for the majority of cleavages. Its function is as follows. The helicase which contains a zinc finger structure displays RNA and DNA duplex-unwinding activities with 5' to 3' polarity. Acts on both ssRNA and dsRNA in a 3' to 5' direction. Functionally, nendoU is a Mn(2+)-dependent, uridylate-specific enzyme, which leaves 2'-3'-cyclic phosphates 5' to the cleaved bond. This Equus caballus (Horse) protein is Replicase polyprotein 1ab (rep).